Here is a 371-residue protein sequence, read N- to C-terminus: Histidinol-phosphate aminotransferase (371 aa).

Lys232 carries the post-translational modification N6-(pyridoxal phosphate)lysine.

Belongs to the class-II pyridoxal-phosphate-dependent aminotransferase family. Histidinol-phosphate aminotransferase subfamily. In terms of assembly, homodimer. It depends on pyridoxal 5'-phosphate as a cofactor.

It carries out the reaction L-histidinol phosphate + 2-oxoglutarate = 3-(imidazol-4-yl)-2-oxopropyl phosphate + L-glutamate. It functions in the pathway amino-acid biosynthesis; L-histidine biosynthesis; L-histidine from 5-phospho-alpha-D-ribose 1-diphosphate: step 7/9. This Methylibium petroleiphilum (strain ATCC BAA-1232 / LMG 22953 / PM1) protein is Histidinol-phosphate aminotransferase.